We begin with the raw amino-acid sequence, 1456 residues long: Sterol 3-beta-glucosyltransferase (1456 aa).

Over residues 60-70 the composition is skewed to acidic residues; it reads ESDEEDGDEVE. 2 disordered regions span residues 60 to 113 and 128 to 156; these read ESDE…SISH and LSPH…TQSE. Residues 71 to 104 are compositionally biased toward low complexity; the sequence is TPSTTTTAVSPSATMSAPSPTATAPTPHSGTHTP. The span at 137 to 146 shows a compositional bias: basic and acidic residues; the sequence is SSHEASRRGS. Residues 200–247 enclose the GRAM 1 domain; the sequence is QKLKGFAALDVDEQLIADYPVWLLKNVLIQGHLYITAKHMCFLSYLPR. Residues 251–351 enclose the PH domain; it reads ANIRSGTLVK…WVKALQKEIF (101 aa). Disordered regions lie at residues 462–512 and 524–776; these read HSAH…PRLP and DKCD…QDTF. A compositionally biased stretch (basic and acidic residues) spans 496–508; sequence QPHERDEKRDSKL. The segment covering 556 to 567 has biased composition (polar residues); that stretch reads LASQRTSSSTLF. Low complexity-rich tracts occupy residues 576–606 and 647–676; these read SQPT…PASA and GGAT…SSPG. A compositionally biased stretch (gly residues) spans 677-696; that stretch reads TPGGLGGPGAVGAGGPGVMG. Over residues 719–735 the composition is skewed to low complexity; the sequence is APHDPAAAAAAADAAAP. The GRAM 2 domain maps to 827-893; that stretch reads ERFQKRFALG…KVVENATKDS (67 aa). The UDP-alpha-D-glucose site is built by Ser1004, Arg1005, Asp1007, Asn1279, Asn1307, His1310, His1323, Ser1326, Gly1327, Thr1328, Asp1347, and Gln1348.

This sequence belongs to the glycosyltransferase 28 family.

The protein resides in the cytoplasm. The protein localises to the membrane. The catalysed reaction is a sterol + UDP-alpha-D-glucose = a sterol 3-beta-D-glucoside + UDP + H(+). The enzyme catalyses ergosterol + UDP-alpha-D-glucose = ergosteryl 3-beta-D-glucoside + UDP + H(+). Functionally, sterol glycosyltransferase responsible for the glycosylation of ergosterol to form ergosterol-glucoside. This Yarrowia lipolytica (strain CLIB 122 / E 150) (Yeast) protein is Sterol 3-beta-glucosyltransferase.